Here is a 75-residue protein sequence, read N- to C-terminus: Molt-inhibiting hormone (75 aa).

Cystine bridges form between Cys-7–Cys-44, Cys-24–Cys-40, and Cys-27–Cys-53. The residue at position 75 (Ala-75) is an Alanine amide.

The protein belongs to the arthropod CHH/MIH/GIH/VIH hormone family.

It is found in the secreted. Inhibits Y-organs where molting hormone (ecdysteroid) is secreted. A molting cycle is initiated when MIH secretion diminishes or stops. The protein is Molt-inhibiting hormone of Procambarus clarkii (Red swamp crayfish).